An 888-amino-acid polypeptide reads, in one-letter code: Valine--tRNA ligase (888 aa).

Residues 43-53 carry the 'HIGH' region motif; sequence PNVTGTLHLGH. A 'KMSKS' region motif is present at residues 538–542; that stretch reads KMSKS. Lys-541 serves as a coordination point for ATP. Residues 821 to 888 are a coiled coil; sequence LIDLDAERAR…RLKAALGRLA (68 aa).

Belongs to the class-I aminoacyl-tRNA synthetase family. ValS type 1 subfamily. As to quaternary structure, monomer.

It localises to the cytoplasm. The catalysed reaction is tRNA(Val) + L-valine + ATP = L-valyl-tRNA(Val) + AMP + diphosphate. In terms of biological role, catalyzes the attachment of valine to tRNA(Val). As ValRS can inadvertently accommodate and process structurally similar amino acids such as threonine, to avoid such errors, it has a 'posttransfer' editing activity that hydrolyzes mischarged Thr-tRNA(Val) in a tRNA-dependent manner. The chain is Valine--tRNA ligase from Gluconobacter oxydans (strain 621H) (Gluconobacter suboxydans).